A 209-amino-acid polypeptide reads, in one-letter code: V-type ATP synthase subunit D 2 (209 aa).

It belongs to the V-ATPase D subunit family.

In terms of biological role, produces ATP from ADP in the presence of a proton gradient across the membrane. The polypeptide is V-type ATP synthase subunit D 2 (atpD2) (Treponema pallidum (strain Nichols)).